The following is a 609-amino-acid chain: MYLILLVVLAVYVTYKLITTVLPHHLLIPSQNWREKISYVVKYPKPIYLKVGTKRSSYRRRLILASENPAFYTNFINNKLKISPNDCENGDGFLNEMSRRDIDDPKRRIIYGFFHPYANNGGGGERVLWQAVKATLLADDKNICVIYTTNIEAQPLDILNKANKKFQIDGLDHSRVVFIYLRKFNNLIDGNYWKHFTLIGQLFGGILLSLEAMYELSPDVWIDTMGLPSSYLLVSLSLKIPILAYTHFPILQEDMFGKLKFQKLKDLWKFNIIKFNDYFALGKFIYWSILYYFYVYLGSKVNIALANGSWTFNHLSKIWVFNTALGNVLDVLYPPCGTEFLIKQANLNQPRSNKLLYLAQFRPEKRHALLLKEYSNFLSNNFPNVTQITNKFPTLVFAGSCRTADDTATLKFLQEQVAKLDLSRFVEFRIDISYDEVVELLSSCKFGLNAMWNEHFGIGVVEYMARGCTPIVHASAGPLLDMIGRNDQQENCLNNWKTDGGFFFKSYDDPDLDPNLQKNTETGYIKFELFDQFIDYPTFETLLKELYVNDPTIIEDSKLLKMRQIDQNRVAEKFSNKAFNKKWIEYINDLNTLEKQYREEKRTKVEQVY.

Residue Met-1 is a topological domain, lumenal. The chain crosses the membrane as a helical span at residues 2 to 22 (YLILLVVLAVYVTYKLITTVL). Residues 23 to 195 (PHHLLIPSQN…NLIDGNYWKH (173 aa)) are Cytoplasmic-facing. Residues 196–216 (FTLIGQLFGGILLSLEAMYEL) constitute an intramembrane region (helical). The Cytoplasmic segment spans residues 217–455 (SPDVWIDTMG…FGLNAMWNEH (239 aa)). An intramembrane region (helical) is located at residues 456–476 (FGIGVVEYMARGCTPIVHASA). At 477 to 609 (GPLLDMIGRN…EKRTKVEQVY (133 aa)) the chain is on the cytoplasmic side.

Belongs to the glycosyltransferase group 1 family.

It is found in the endoplasmic reticulum membrane. It catalyses the reaction an alpha-D-Man-(1-&gt;3)-[alpha-D-Man-(1-&gt;6)]-beta-D-Man-(1-&gt;4)-beta-D-GlcNAc-(1-&gt;4)-alpha-D-GlcNAc-diphospho-di-trans,poly-cis-dolichol + 2 GDP-alpha-D-mannose = an alpha-D-Man-(1-&gt;2)-alpha-D-Man-(1-&gt;2)-alpha-D-Man-(1-&gt;3)-[alpha-D-Man-(1-&gt;6)]-beta-D-Man-(1-&gt;4)-beta-D-GlcNAc-(1-&gt;4)-alpha-D-GlcNAc-diphospho-di-trans,poly-cis-dolichol + 2 GDP + 2 H(+). It participates in protein modification; protein glycosylation. GDP-Man:Man(3)GlcNAc(2)-PP-Dol alpha-1,2-mannosyltransferase that operates in the biosynthetic pathway of dolichol-linked oligosaccharides, the glycan precursors employed in protein asparagine (N)-glycosylation. The assembly of dolichol-linked oligosaccharides begins on the cytosolic side of the endoplasmic reticulum membrane and finishes in its lumen. The sequential addition of sugars to dolichol pyrophosphate produces dolichol-linked oligosaccharides containing fourteen sugars, including two GlcNAcs, nine mannoses and three glucoses. Once assembled, the oligosaccharide is transferred from the lipid to nascent proteins by oligosaccharyltransferases. Catalyzes, on the cytoplasmic face of the endoplasmic reticulum, the addition of the fourth and fifth mannose residues to the dolichol-linked oligosaccharide chain, to produce Man(5)GlcNAc(2)-PP-dolichol core oligosaccharide. In Candida albicans (strain SC5314 / ATCC MYA-2876) (Yeast), this protein is GDP-Man:Man(3)GlcNAc(2)-PP-Dol alpha-1,2-mannosyltransferase (ALG11).